Reading from the N-terminus, the 412-residue chain is Putative pectate lyase 11 (412 aa).

A signal peptide spans 1-24 (MVSYSNNHFAYAFLLLLTIGNTLA). 3 residues coordinate Ca(2+): D210, D234, and D238. Residue R290 is part of the active site.

This sequence belongs to the polysaccharide lyase 1 family. It depends on Ca(2+) as a cofactor.

It catalyses the reaction Eliminative cleavage of (1-&gt;4)-alpha-D-galacturonan to give oligosaccharides with 4-deoxy-alpha-D-galact-4-enuronosyl groups at their non-reducing ends.. It functions in the pathway glycan metabolism; pectin degradation; 2-dehydro-3-deoxy-D-gluconate from pectin: step 2/5. This Arabidopsis thaliana (Mouse-ear cress) protein is Putative pectate lyase 11.